Consider the following 280-residue polypeptide: Putative transcription factor kapC (280 aa).

The segment at 1–102 is disordered; the sequence is MQPALAPHPS…GKRPLSTSKR (102 aa). The segment covering 39 to 49 has biased composition (pro residues); the sequence is PQPPAPQPPHM. The segment covering 79–89 has biased composition (polar residues); the sequence is TQPDVTGQETP. A bZIP domain is found at 96-159; that stretch reads PLSTSKRAAQ…EYIINLQSRL (64 aa). The segment at 97–120 is basic motif; the sequence is LSTSKRAAQNRAAQRAFRQRKEAH. Residues 124–155 form a leucine-zipper region; sequence LEGKVKAYESMGEAIKALQAENYQLREYIINL. The interval 169–280 is disordered; sequence LPGNIDLSQP…EQTHGLPLIS (112 aa). Residues 197 to 206 show a composition bias toward pro residues; that stretch reads APPPTAPQQP.

Belongs to the bZIP family.

The protein localises to the nucleus. In terms of biological role, putative transcription factor. This chain is Putative transcription factor kapC (kapC), found in Aspergillus fumigatus (strain ATCC MYA-4609 / CBS 101355 / FGSC A1100 / Af293) (Neosartorya fumigata).